Here is a 78-residue protein sequence, read N- to C-terminus: Defensin-like protein 149 (78 aa).

The signal sequence occupies residues 1–25 (MMKKLIQLSFTVMIIFTILVLGVVA). 4 cysteine pairs are disulfide-bonded: cysteine 36/cysteine 77, cysteine 45/cysteine 65, cysteine 50/cysteine 71, and cysteine 54/cysteine 73.

This sequence belongs to the DEFL family.

The protein resides in the secreted. The protein is Defensin-like protein 149 (LCR5) of Arabidopsis thaliana (Mouse-ear cress).